Reading from the N-terminus, the 324-residue chain is Pancreas transcription factor 1 subunit alpha (324 aa).

A bHLH domain is found at 160 to 212; sequence QLRQAANVRERRRMQSINDAFEGLRSHIPTLPYEKRLSKVDTLRLAIGYINFL. Residues 302 to 324 form a disordered region; sequence DPRKLNSKSFDNIENEPPFEFVS.

In terms of assembly, component of the pancreas transcription factor 1 complex (PTF1) which is composed of TCF3/p75, TCF12/p64 and PTF1A/p48. TCF3 is responsible for the nuclear import of the p48/p64 complex. Interacts with TCF3 and RBPSUH/RBP-Jkappa. As to expression, expressed in precursors of pancreatic islets, acini and ducts.

It is found in the nucleus. The protein resides in the cytoplasm. Functionally, transcription factor implicated in the cell fate determination in various organs. Binds to the E-box consensus sequence 5'-CANNTG-3'. Plays a role in early and late pancreas development and differentiation. Important for determining whether cells allocated to the pancreatic buds continue towards pancreatic organogenesis or revert back to duodenal fates. May be involved in the maintenance of exocrine pancreas-specific gene expression including ELA1 and amylase. Required for the formation of pancreatic acinar and ductal cells. Plays an important role in cerebellar development. Directly regulated by FOXN4 and RORC during retinal development, FOXN4-PTF1A pathway plays a central role in directing the differentiation of retinal progenitors towards horizontal and amacrine fates. The sequence is that of Pancreas transcription factor 1 subunit alpha (Ptf1a) from Mus musculus (Mouse).